The chain runs to 257 residues: Isoprenyl transferase 1 (257 aa).

The active site involves aspartate 37. Residue aspartate 37 participates in Mg(2+) binding. Substrate-binding positions include 38–41 (GNRR), tryptophan 42, histidine 54, and 82–84 (STD). Asparagine 85 functions as the Proton acceptor in the catalytic mechanism. Residues phenylalanine 86, arginine 88, arginine 206, and 212-214 (RLS) each bind substrate. Residue glutamate 225 participates in Mg(2+) binding.

It belongs to the UPP synthase family. As to quaternary structure, homodimer. Mg(2+) serves as cofactor.

In terms of biological role, catalyzes the condensation of isopentenyl diphosphate (IPP) with allylic pyrophosphates generating different type of terpenoids. This chain is Isoprenyl transferase 1, found in Streptomyces avermitilis (strain ATCC 31267 / DSM 46492 / JCM 5070 / NBRC 14893 / NCIMB 12804 / NRRL 8165 / MA-4680).